The sequence spans 204 residues: 3,4-dihydroxy-2-butanone 4-phosphate synthase (204 aa).

Position 30 (glutamate 30) interacts with Mg(2+). Aspartate 34 is a D-ribulose 5-phosphate binding site. Cysteine 59 is modified (S-glutathionyl cysteine). Residues threonine 85 and 142–146 (RRGHT) each bind D-ribulose 5-phosphate. Histidine 145 is a binding site for Mg(2+).

As to quaternary structure, homodimer. Mg(2+) is required as a cofactor. Mn(2+) serves as cofactor. Post-translationally, S-glutathionylation is reversible and dependent on a glutaredoxin.

It carries out the reaction D-ribulose 5-phosphate = (2S)-2-hydroxy-3-oxobutyl phosphate + formate + H(+). It participates in cofactor biosynthesis; riboflavin biosynthesis; 2-hydroxy-3-oxobutyl phosphate from D-ribulose 5-phosphate: step 1/1. In terms of biological role, catalyzes the conversion of D-ribulose 5-phosphate to formate and 3,4-dihydroxy-2-butanone 4-phosphate. The sequence is that of 3,4-dihydroxy-2-butanone 4-phosphate synthase (RIB3) from Candida albicans (strain SC5314 / ATCC MYA-2876) (Yeast).